The chain runs to 329 residues: Interleukin-12 subunit beta (329 aa).

The first 22 residues, 1 to 22, serve as a signal peptide directing secretion; it reads MCHQWLVLSWFSLVLLASPLMA. Residues 29 to 106 enclose the Ig-like C2-type domain; sequence DVYVVELDWY…LSHSHLLLHK (78 aa). A disulfide bridge connects residues Cys-50 and Cys-90. N-linked (GlcNAc...) asparagine glycans are attached at residues Asn-125, Asn-135, and Asn-223. Residues 238-329 enclose the Fibronectin type-III domain; the sequence is PPKNLQLKPL…WSEWASVSCS (92 aa).

The protein belongs to the IL-12B family. As to quaternary structure, heterodimer with IL12A; disulfide-linked. The heterodimer is known as interleukin IL-12. Heterodimer with IL23A; disulfide-linked. The heterodimer is known as interleukin IL-23. Also secreted as a monomer. Interacts with NBR1; this interaction promotes IL-12 secretion.

It localises to the secreted. Functionally, cytokine that can act as a growth factor for activated T and NK cells, enhance the lytic activity of NK/lymphokine-activated killer cells, and stimulate the production of IFN-gamma by resting PBMC. Associates with IL23A to form the IL-23 interleukin, a heterodimeric cytokine which functions in innate and adaptive immunity. IL-23 may constitute with IL-17 an acute response to infection in peripheral tissues. IL-23 binds to a heterodimeric receptor complex composed of IL12RB1 and IL23R, activates the Jak-Stat signaling cascade, stimulates memory rather than naive T-cells and promotes production of pro-inflammatory cytokines. IL-23 induces autoimmune inflammation and thus may be responsible for autoimmune inflammatory diseases and may be important for tumorigenesis. The chain is Interleukin-12 subunit beta (IL12B) from Equus caballus (Horse).